We begin with the raw amino-acid sequence, 188 residues long: Fructose-1-phosphate phosphatase YqaB (188 aa).

The active-site Nucleophile is Asp-11. Residues Asp-11, Asp-13, and Asp-167 each coordinate Mg(2+). Residue Asp-11–Asp-13 coordinates substrate.

It belongs to the HAD-like hydrolase superfamily. CbbY/CbbZ/Gph/YieH family. The cofactor is Mg(2+). Mn(2+) is required as a cofactor. Requires Co(2+) as cofactor. It depends on Zn(2+) as a cofactor.

Its function is as follows. Catalyzes strongly the dephosphorylation of fructose-1-phosphate (Fru1P) and slightly the dephosphorylation of 6-phosphogluconate (6P-Glu). It has low beta-phosphoglucomutase activity. This Escherichia coli (strain K12) protein is Fructose-1-phosphate phosphatase YqaB (yqaB).